A 298-amino-acid polypeptide reads, in one-letter code: DegV domain-containing protein UU535 (298 aa).

Positions 5–287 (FLIMTDSSTT…KGALGIQVIA (283 aa)) constitute a DegV domain. Positions 65 and 96 each coordinate hexadecanoate.

Its function is as follows. May bind long-chain fatty acids, such as palmitate, and may play a role in lipid transport or fatty acid metabolism. In Ureaplasma parvum serovar 3 (strain ATCC 700970), this protein is DegV domain-containing protein UU535.